A 171-amino-acid chain; its full sequence is uncharacterized protein (171 aa).

A helical transmembrane segment spans residues 5–25; the sequence is FLLTIFALWVGGFGYYLYLIN.

Its subcellular location is the membrane. This is an uncharacterized protein from Rickettsia conorii (strain ATCC VR-613 / Malish 7).